The primary structure comprises 190 residues: Apolipoprotein M (190 aa).

Positions 1 to 22 form a signal peptide, not cleaved; sequence MFHQVWAALLSLYGLLFNSMNQ. 3 cysteine pairs are disulfide-bonded: Cys23–Cys169, Cys95–Cys185, and Cys130–Cys159. 2 residues coordinate tetradecanoate: Glu138 and Arg145.

Belongs to the calycin superfamily. Lipocalin family. Highly divergent. In terms of assembly, interacts with LRP2; LRP2 mediates APOM renal uptake and subsequent lysosomal degradation. In terms of tissue distribution, expressed by the liver; secreted in plasma.

Its subcellular location is the secreted. Probably involved in lipid transport. Can bind sphingosine-1-phosphate, myristic acid, palmitic acid and stearic acid, retinol, all-trans-retinoic acid and 9-cis-retinoic acid. The sequence is that of Apolipoprotein M (Apom) from Mus musculus (Mouse).